Here is a 316-residue protein sequence, read N- to C-terminus: Ribosomal RNA large subunit methyltransferase F (316 aa).

The protein belongs to the methyltransferase superfamily. METTL16/RlmF family.

The protein resides in the cytoplasm. The catalysed reaction is adenosine(1618) in 23S rRNA + S-adenosyl-L-methionine = N(6)-methyladenosine(1618) in 23S rRNA + S-adenosyl-L-homocysteine + H(+). Functionally, specifically methylates the adenine in position 1618 of 23S rRNA. This Pseudomonas putida (strain W619) protein is Ribosomal RNA large subunit methyltransferase F.